Here is an 802-residue protein sequence, read N- to C-terminus: Osmosensitive cation channel TMEM63C (802 aa).

Residues 1-35 lie on the Extracellular side of the membrane; the sequence is MTASPESMGQKFRNMTANECFQSRSTVLQGQPFGG. A helical membrane pass occupies residues 36–60; that stretch reads IPTVLLLNIILWVCVVLVYSFLRKA. The Cytoplasmic segment spans residues 61–124; the sequence is AWDYGRLALL…RDRDLINKCG (64 aa). Residues Ser-75 and Ser-78 each carry the phosphoserine modification. Residues 125–157 form a helical membrane-spanning segment; the sequence is EDARIYIMFQYHLIIFVLILCIPSLGIILPVNY. At 158–180 the chain is on the extracellular side; sequence IGSALDWSSHFGRTTIVNVSTES. A helical membrane pass occupies residues 181 to 205; sequence QFLWLHSIFAFMYFLTNFAFMGHHC. Over 206 to 401 the chain is Cytoplasmic; sequence LGFVPKKNLH…IIWKHLSIRR (196 aa). Residues 402 to 431 traverse the membrane as a helical segment; it reads FSWWARFIAINTSLFFLFFFLTTPAIIINT. The Extracellular portion of the chain corresponds to 432-446; the sequence is IDMYNVTRPIEKLQS. Residues 447–476 traverse the membrane as a helical segment; it reads PVVTQFFPSVLLWAFTVIMPLLVYFSAFLE. The Cytoplasmic segment spans residues 477–480; that stretch reads AHWT. Residues 481-517 traverse the membrane as a helical segment; the sequence is RSNQNLIIMYKCYIFLVFMVVILPSMGLTSLDVFLRW. Topologically, residues 518-540 are extracellular; it reads LFDIYYLEHATIRFQCVFLPDNG. The chain crosses the membrane as a helical span at residues 541–573; it reads AFFINYVITSALFGTGMELMRLGSLCTYCTRLF. Residues 574 to 593 lie on the Cytoplasmic side of the membrane; it reads LSRSEPERVHIRKNLAMDFQ. The helical transmembrane segment at 594–612 threads the bilayer; sequence FGREYAWMLNVFSVVMAYS. Residues 613–615 lie on the Extracellular side of the membrane; it reads ITC. The chain crosses the membrane as a helical span at residues 616 to 640; sequence PIIVPFGLLYLCMKHITDRYNMYYS. Topologically, residues 641–647 are cytoplasmic; sequence YAPTKLN. The helical transmembrane segment at 648 to 676 threads the bilayer; that stretch reads AQIHMAAVYQAIFAPLLGLFWMLFFSILR. Residues 677–681 lie on the Extracellular side of the membrane; the sequence is VGSLH. The helical transmembrane segment at 682 to 702 threads the bilayer; sequence SITLFSLSSIIISVIIAFSGV. Topologically, residues 703–802 are cytoplasmic; sequence FLGKFRIAQQ…EGLELEGQSH (100 aa). A disordered region spans residues 753–785; that stretch reads TPASSPARHTYGTMNSQPEEGEEESGLRGFARE.

It belongs to the CSC1 (TC 1.A.17) family. As to quaternary structure, monomer. Expressed in podocytes of kidney glomeruli.

The protein resides in the endoplasmic reticulum membrane. It localises to the cell membrane. The enzyme catalyses Ca(2+)(in) = Ca(2+)(out). Acts as an osmosensitive cation channel preferentially activated upon hypotonic stress. In contrast to TMEM63B, does not show phospholipid scramblase activity. Enriched in mitochondria-ER contact sites where it may regulate the metabolite flux and organelles' morphologies in response to osmotic changes. In particular may regulate mitochondrial motility and function in motor neuron axons. Required for the functional integrity of the kidney glomerular filtration barrier. This Rattus norvegicus (Rat) protein is Osmosensitive cation channel TMEM63C (Tmem63c).